The following is a 161-amino-acid chain: Pleiotrophin-A (161 aa).

The signal sequence occupies residues 1 to 23 (MRHQHGLFMLALLAFLFVITVLG). 5 disulfides stabilise this stretch: Cys-41–Cys-70, Cys-49–Cys-79, Cys-56–Cys-83, Cys-93–Cys-125, and Cys-103–Cys-135. 2 chondroitin sulfate binding regions span residues 86-93 (KKQFGAEC) and 117-125 (KRALHNAEC). The tract at residues 136–161 (GKVTKPKLQESKKKKKEGKNKEKLLD) is disordered. Residues 141 to 161 (PKLQESKKKKKEGKNKEKLLD) form a chondroitin sulfate A binding region.

It belongs to the pleiotrophin family. Expressed in high levels in brain and eye. Lower levels in bone. In the tailbud embryo stage, it is expressed exclusively in the central nervous system, especially in the hind region of the brain.

The protein resides in the secreted. Its function is as follows. Secreted growth factor that mediates its signal through cell-surface proteoglycan and non-proteoglycan receptors. Binds cell-surface proteoglycan receptor via their chondroitin sulfate (CS) groups. Thereby regulates many processes like cell proliferation, cell survival, cell growth, cell differentiation and cell migration. Has antibacterial activity against both Gram-positive and Gram-negative bacteria. The sequence is that of Pleiotrophin-A (ptn-a) from Xenopus laevis (African clawed frog).